A 316-amino-acid polypeptide reads, in one-letter code: Putative mannose-6-phosphate isomerase YvyI (316 aa).

Residues His-98, Glu-116, and His-173 each contribute to the Zn(2+) site. Arg-193 is an active-site residue.

Belongs to the mannose-6-phosphate isomerase type 1 family. It depends on Zn(2+) as a cofactor.

The catalysed reaction is D-mannose 6-phosphate = D-fructose 6-phosphate. This is Putative mannose-6-phosphate isomerase YvyI (yvyI) from Bacillus subtilis (strain 168).